The primary structure comprises 113 residues: Large ribosomal subunit protein bL17 (113 aa).

Belongs to the bacterial ribosomal protein bL17 family. As to quaternary structure, part of the 50S ribosomal subunit. Contacts protein L32.

This is Large ribosomal subunit protein bL17 from Caldicellulosiruptor saccharolyticus (strain ATCC 43494 / DSM 8903 / Tp8T 6331).